We begin with the raw amino-acid sequence, 191 residues long: Thymidylate kinase (191 aa).

Residue 7–14 (GVDGAGKS) participates in ATP binding.

It belongs to the thymidylate kinase family.

The enzyme catalyses dTMP + ATP = dTDP + ADP. Its function is as follows. Phosphorylation of dTMP to form dTDP in both de novo and salvage pathways of dTTP synthesis. The protein is Thymidylate kinase of Helicobacter pylori (strain Shi470).